The sequence spans 194 residues: Adenylate kinase (194 aa).

10 to 15 (GAGKGT) contributes to the ATP binding site. The segment at 30–59 (STGDMLRAAVAAGTPVGLKAKAVMESGGLV) is NMP. AMP-binding positions include threonine 31, arginine 36, 57-59 (GLV), 85-88 (GFPR), and glutamine 92. Positions 126–142 (NRAAEAKAKGEPVRKDD) are LID. An ATP-binding site is contributed by arginine 127. The AMP site is built by arginine 139 and arginine 150. Residue alanine 178 coordinates ATP.

It belongs to the adenylate kinase family. In terms of assembly, monomer.

Its subcellular location is the cytoplasm. It carries out the reaction AMP + ATP = 2 ADP. The protein operates within purine metabolism; AMP biosynthesis via salvage pathway; AMP from ADP: step 1/1. Catalyzes the reversible transfer of the terminal phosphate group between ATP and AMP. Plays an important role in cellular energy homeostasis and in adenine nucleotide metabolism. This chain is Adenylate kinase, found in Azorhizobium caulinodans (strain ATCC 43989 / DSM 5975 / JCM 20966 / LMG 6465 / NBRC 14845 / NCIMB 13405 / ORS 571).